Consider the following 283-residue polypeptide: Phosphatidylserine decarboxylase proenzyme (283 aa).

Residues Asp90, His143, and Ser248 each act as charge relay system; for autoendoproteolytic cleavage activity in the active site. Ser248 acts as the Schiff-base intermediate with substrate; via pyruvic acid; for decarboxylase activity in catalysis. Ser248 bears the Pyruvic acid (Ser); by autocatalysis mark.

It belongs to the phosphatidylserine decarboxylase family. PSD-B subfamily. Prokaryotic type I sub-subfamily. As to quaternary structure, heterodimer of a large membrane-associated beta subunit and a small pyruvoyl-containing alpha subunit. It depends on pyruvate as a cofactor. Is synthesized initially as an inactive proenzyme. Formation of the active enzyme involves a self-maturation process in which the active site pyruvoyl group is generated from an internal serine residue via an autocatalytic post-translational modification. Two non-identical subunits are generated from the proenzyme in this reaction, and the pyruvate is formed at the N-terminus of the alpha chain, which is derived from the carboxyl end of the proenzyme. The autoendoproteolytic cleavage occurs by a canonical serine protease mechanism, in which the side chain hydroxyl group of the serine supplies its oxygen atom to form the C-terminus of the beta chain, while the remainder of the serine residue undergoes an oxidative deamination to produce ammonia and the pyruvoyl prosthetic group on the alpha chain. During this reaction, the Ser that is part of the protease active site of the proenzyme becomes the pyruvoyl prosthetic group, which constitutes an essential element of the active site of the mature decarboxylase.

It localises to the cell membrane. The catalysed reaction is a 1,2-diacyl-sn-glycero-3-phospho-L-serine + H(+) = a 1,2-diacyl-sn-glycero-3-phosphoethanolamine + CO2. It participates in phospholipid metabolism; phosphatidylethanolamine biosynthesis; phosphatidylethanolamine from CDP-diacylglycerol: step 2/2. Functionally, catalyzes the formation of phosphatidylethanolamine (PtdEtn) from phosphatidylserine (PtdSer). The protein is Phosphatidylserine decarboxylase proenzyme of Francisella tularensis subsp. holarctica (strain OSU18).